The following is a 691-amino-acid chain: 1,4-alpha-glucan-branching enzyme (691 aa).

(1,4-alpha-D-glucosyl)n is bound by residues Trp-80 and Lys-116. Catalysis depends on Asp-333, which acts as the Nucleophile. Catalysis depends on Glu-398, which acts as the Proton donor.

It belongs to the glycosyl hydrolase 13 family. GlgB subfamily.

It localises to the cytoplasm. It carries out the reaction Transfers a segment of a (1-&gt;4)-alpha-D-glucan chain to a primary hydroxy group in a similar glucan chain.. It participates in glycan biosynthesis; glycogen biosynthesis. In terms of biological role, glycogen-branching enzyme participates in the glycogen biosynthetic process along with glycogenin and glycogen synthase. Generates alpha-1,6-glucosidic branches from alpha-1,4-linked glucose chains, to increase solubility of the glycogen polymer. The protein is 1,4-alpha-glucan-branching enzyme (GLC3) of Yarrowia lipolytica (strain CLIB 122 / E 150) (Yeast).